The sequence spans 204 residues: Small ribosomal subunit protein uS4 (204 aa).

In terms of domain architecture, S4 RNA-binding spans 95-157 (RRLDNTVFRM…KGIHSIIRHN (63 aa)).

It belongs to the universal ribosomal protein uS4 family. Part of the 30S ribosomal subunit. Contacts protein S5. The interaction surface between S4 and S5 is involved in control of translational fidelity.

Its function is as follows. One of the primary rRNA binding proteins, it binds directly to 16S rRNA where it nucleates assembly of the body of the 30S subunit. In terms of biological role, with S5 and S12 plays an important role in translational accuracy. This is Small ribosomal subunit protein uS4 from Treponema pallidum (strain Nichols).